A 493-amino-acid polypeptide reads, in one-letter code: Fizzy-related protein homolog (493 aa).

Disordered stretches follow at residues Leu31–Ser51, Ile64–Gly88, and Glu105–Lys166. Thr32 carries the post-translational modification Phosphothreonine. The segment covering Thr32–Ser42 has biased composition (polar residues). At Ser36 the chain carries Phosphoserine. Lys69 is modified (N6-acetyllysine). Composition is skewed to basic and acidic residues over residues Lys76–Lys86 and Lys106–Gly126. Ser133, Ser138, Ser146, and Ser151 each carry phosphoserine. Residues Ser146 to Leu160 are compositionally biased toward polar residues. An N6-acetyllysine modification is found at Lys159. WD repeat units lie at residues Pro182 to Leu222, Val227 to Met266, Gly269 to Glu306, Gly311 to Gln350, Glu353 to Cys395, Asp397 to Lys438, and Gly441 to Lys480.

The protein belongs to the WD repeat CDC20/Fizzy family. In terms of assembly, the unphosphorylated form interacts with APC/C during mitosis. Interacts with NINL. Interacts (in complex with the anaphase promoting complex APC) with MAD2L2; inhibits FZR1-mediated APC/C activation. Interacts with SIRT2. Interacts with USP37. Interacts (via WD repeats) with MAK. Interacts with RBBP8/CtIP; this interaction leads to RBBP8 proteasomal degradation. Interacts with HECW2. Interacts with SASS6; the interaction is regulated by CENATAC and leads to SASS6 proteasomal degradation. Interacts (via N-terminus) with CCNF. Interacts with CDC6. Interacts with TK1 (via the KEN box). Post-translationally, acetylated. Deacetylated by SIRT2 at Lys-69 and Lys-159; deacetylation enhances the interaction of FZR1 with CDC27, leading to activation of anaphase promoting complex/cyclosome (APC/C). In terms of processing, following DNA damage, it is dephosphorylated by CDC14B in G2 phase, leading to its reassociation with the APC/C, and allowing an efficient G2 DNA damage checkpoint. Phosphorylated by MAK.

The protein operates within protein modification; protein ubiquitination. Its function is as follows. Substrate-specific adapter for the anaphase promoting complex/cyclosome (APC/C) E3 ubiquitin-protein ligase complex. Associates with the APC/C in late mitosis, in replacement of CDC20, and activates the APC/C during anaphase and telophase. The APC/C remains active in degrading substrates to ensure that positive regulators of the cell cycle do not accumulate prematurely. At the G1/S transition FZR1 is phosphorylated, leading to its dissociation from the APC/C. Following DNA damage, it is required for the G2 DNA damage checkpoint: its dephosphorylation and reassociation with the APC/C leads to the ubiquitination of PLK1, preventing entry into mitosis. Acts as an adapter for APC/C to target the DNA-end resection factor RBBP8/CtIP for ubiquitination and subsequent proteasomal degradation. Through the regulation of RBBP8/CtIP protein turnover, may play a role in DNA damage response, favoring DNA double-strand repair through error-prone non-homologous end joining (NHEJ) over error-free, RBBP8-mediated homologous recombination (HR). This chain is Fizzy-related protein homolog (Fzr1), found in Mus musculus (Mouse).